The following is a 205-amino-acid chain: Ribonuclease HII (205 aa).

The 190-residue stretch at 16–205 (VSEVGIDEVG…KSFLNQSDLI (190 aa)) folds into the RNase H type-2 domain. A divalent metal cation is bound by residues aspartate 22, glutamate 23, and aspartate 118.

Belongs to the RNase HII family. Mn(2+) is required as a cofactor. The cofactor is Mg(2+).

It localises to the cytoplasm. It carries out the reaction Endonucleolytic cleavage to 5'-phosphomonoester.. Functionally, endonuclease that specifically degrades the RNA of RNA-DNA hybrids. The sequence is that of Ribonuclease HII from Prochlorococcus marinus (strain MIT 9312).